A 72-amino-acid chain; its full sequence is Exodeoxyribonuclease 7 small subunit (72 aa).

Belongs to the XseB family. Heterooligomer composed of large and small subunits.

It is found in the cytoplasm. It catalyses the reaction Exonucleolytic cleavage in either 5'- to 3'- or 3'- to 5'-direction to yield nucleoside 5'-phosphates.. Its function is as follows. Bidirectionally degrades single-stranded DNA into large acid-insoluble oligonucleotides, which are then degraded further into small acid-soluble oligonucleotides. This Chlamydia muridarum (strain MoPn / Nigg) protein is Exodeoxyribonuclease 7 small subunit.